The sequence spans 227 residues: Large ribosomal subunit protein uL1 (227 aa).

The protein belongs to the universal ribosomal protein uL1 family. Part of the 50S ribosomal subunit.

Functionally, binds directly to 23S rRNA. The L1 stalk is quite mobile in the ribosome, and is involved in E site tRNA release. Protein L1 is also a translational repressor protein, it controls the translation of the L11 operon by binding to its mRNA. In Tropheryma whipplei (strain TW08/27) (Whipple's bacillus), this protein is Large ribosomal subunit protein uL1.